A 459-amino-acid polypeptide reads, in one-letter code: ATP synthase subunit beta (459 aa).

149-156 (GGAGVGKT) is an ATP binding site.

This sequence belongs to the ATPase alpha/beta chains family. As to quaternary structure, F-type ATPases have 2 components, CF(1) - the catalytic core - and CF(0) - the membrane proton channel. CF(1) has five subunits: alpha(3), beta(3), gamma(1), delta(1), epsilon(1). CF(0) has three main subunits: a(1), b(2) and c(9-12). The alpha and beta chains form an alternating ring which encloses part of the gamma chain. CF(1) is attached to CF(0) by a central stalk formed by the gamma and epsilon chains, while a peripheral stalk is formed by the delta and b chains.

It localises to the cell inner membrane. It carries out the reaction ATP + H2O + 4 H(+)(in) = ADP + phosphate + 5 H(+)(out). Functionally, produces ATP from ADP in the presence of a proton gradient across the membrane. The catalytic sites are hosted primarily by the beta subunits. The polypeptide is ATP synthase subunit beta (Pseudomonas syringae pv. tomato (strain ATCC BAA-871 / DC3000)).